Consider the following 289-residue polypeptide: Shikimate dehydrogenase (NADP(+)) (289 aa).

Shikimate-binding positions include 19 to 21 and threonine 66; that span reads SLS. Lysine 70 (proton acceptor) is an active-site residue. Shikimate-binding residues include asparagine 91 and aspartate 106. Residues 131–135 and leucine 229 each bind NADP(+); that span reads GNGGA. Tyrosine 231 contacts shikimate. Position 252 (glycine 252) interacts with NADP(+).

Belongs to the shikimate dehydrogenase family. In terms of assembly, homodimer.

It carries out the reaction shikimate + NADP(+) = 3-dehydroshikimate + NADPH + H(+). The protein operates within metabolic intermediate biosynthesis; chorismate biosynthesis; chorismate from D-erythrose 4-phosphate and phosphoenolpyruvate: step 4/7. Functionally, involved in the biosynthesis of the chorismate, which leads to the biosynthesis of aromatic amino acids. Catalyzes the reversible NADPH linked reduction of 3-dehydroshikimate (DHSA) to yield shikimate (SA). The polypeptide is Shikimate dehydrogenase (NADP(+)) (Nostoc sp. (strain PCC 7120 / SAG 25.82 / UTEX 2576)).